The sequence spans 800 residues: Elongation factor G, mitochondrial (800 aa).

The transit peptide at 1–34 directs the protein to the mitochondrion; that stretch reads MSVHTVMRTQVRSLAGMPKAAMRPLGNSFCARRY. The tr-type G domain occupies 99-385; that stretch reads SKVRNIGIAA…GICDYLPNPA (287 aa). GTP contacts are provided by residues 108–115, 183–187, and 237–240; these read AHIDSGKT, DTPGH, and NKMD.

Belongs to the TRAFAC class translation factor GTPase superfamily. Classic translation factor GTPase family. EF-G/EF-2 subfamily.

The protein localises to the mitochondrion. The protein operates within protein biosynthesis; polypeptide chain elongation. In terms of biological role, mitochondrial GTPase that catalyzes the GTP-dependent ribosomal translocation step during translation elongation. During this step, the ribosome changes from the pre-translocational (PRE) to the post-translocational (POST) state as the newly formed A-site-bound peptidyl-tRNA and P-site-bound deacylated tRNA move to the P and E sites, respectively. Catalyzes the coordinated movement of the two tRNA molecules, the mRNA and conformational changes in the ribosome. This chain is Elongation factor G, mitochondrial, found in Coccidioides immitis (strain RS) (Valley fever fungus).